Reading from the N-terminus, the 92-residue chain is DNA-directed RNA polymerase subunit Rpo11 (92 aa).

The protein belongs to the archaeal Rpo11/eukaryotic RPB11/RPC19 RNA polymerase subunit family. As to quaternary structure, part of the RNA polymerase complex.

The protein resides in the cytoplasm. It catalyses the reaction RNA(n) + a ribonucleoside 5'-triphosphate = RNA(n+1) + diphosphate. Functionally, DNA-dependent RNA polymerase (RNAP) catalyzes the transcription of DNA into RNA using the four ribonucleoside triphosphates as substrates. The protein is DNA-directed RNA polymerase subunit Rpo11 of Pyrobaculum aerophilum (strain ATCC 51768 / DSM 7523 / JCM 9630 / CIP 104966 / NBRC 100827 / IM2).